A 1045-amino-acid polypeptide reads, in one-letter code: Protein phosphatase Slingshot (1045 aa).

Residues 1 to 20 show a composition bias toward polar residues; the sequence is MALVTVQRSPSVAGSCSNSD. 4 disordered regions span residues 1-35, 58-80, 143-194, and 306-325; these read MALVTVQRSPSVAGSCSNSDGESEDDEGNSKGNDR, TQSERRLSTDSTRSSNSTQSNNS, KVGG…DNKN, and ESRRPPSPDAIRNKPPEKEE. Positions 66–80 are enriched in low complexity; sequence TDSTRSSNSTQSNNS. The span at 149–174 shows a compositional bias: polar residues; the sequence is GTKSSTSPAVPTQRQLSVEQTATEAS. Positions 175–185 are enriched in basic and acidic residues; it reads SKCDKTADKEN. The DEK-C domain occupies 324–379; the sequence is EETESVIKMKLKAIMMSVDLDEVTSKYIRGRLEEILDMDLGEYKSFIDAEMLVILG. Positions 383 to 524 constitute a Tyrosine-protein phosphatase domain; the sequence is APTKIFEHVY…LETYSGMLDA (142 aa). The Phosphocysteine intermediate role is filled by Cys468. The segment covering 529–547 has biased composition (basic and acidic residues); the sequence is EKLQRSKSETNLKSTKDAR. 3 disordered regions span residues 529–631, 699–799, and 1001–1045; these read EKLQ…PERS, SHLG…GDNR, and ACSA…SDSS. Positions 560–569 are enriched in polar residues; sequence ALNQAKSKST. The segment covering 586–601 has biased composition (basic residues); sequence MHRRSIAQKSQRRMVR. Positions 602–625 are enriched in polar residues; sequence RSSSTSPKTQTAVVTKQQSQSMEN. The segment covering 704-713 has biased composition (low complexity); that stretch reads SVSGSSSGNI. Residue Ser719 is modified to Phosphoserine. Positions 721-732 are enriched in low complexity; the sequence is CSDVFSSQVDSV. 2 stretches are compositionally biased toward polar residues: residues 764-774 and 1008-1021; these read TPQQQKQQSNA and KKTTSHQSLPSSPV. Residues 1029 to 1045 are compositionally biased toward low complexity; that stretch reads SAASNSNSSASNSSDSS.

It belongs to the protein-tyrosine phosphatase family. In terms of assembly, interacts with actin.

Its subcellular location is the cytoplasm. The protein resides in the cytoskeleton. The enzyme catalyses O-phospho-L-tyrosyl-[protein] + H2O = L-tyrosyl-[protein] + phosphate. It catalyses the reaction O-phospho-L-seryl-[protein] + H2O = L-seryl-[protein] + phosphate. It carries out the reaction O-phospho-L-threonyl-[protein] + H2O = L-threonyl-[protein] + phosphate. Functionally, protein phosphatase which regulates actin filament dynamics. Dephosphorylates and activates the actin binding/depolymerizing factor tsr/cofilin, which subsequently binds to actin filaments and stimulates their disassembly. Required for axon growth. The sequence is that of Protein phosphatase Slingshot (ssh) from Drosophila melanogaster (Fruit fly).